The chain runs to 424 residues: Isoflavipucine cluster transcription factor ATEG_00326 (424 aa).

The zn(2)-C6 fungal-type DNA-binding region spans 10-38; that stretch reads CDRCHGQKLRCIHSGGGPCVRCAKAKATC. Residues 265–286 are disordered; sequence ARMQTPEGTPERTSESSPSGPP.

The protein resides in the nucleus. Functionally, transcription factor that regulates the expression of the gene cluster that mediates the biosynthesis of isoflavipucine. This Aspergillus terreus (strain NIH 2624 / FGSC A1156) protein is Isoflavipucine cluster transcription factor ATEG_00326.